Reading from the N-terminus, the 733-residue chain is MMISKKYTLWALNPLLLTMMAPAVAQQTDDETFVVSANRSNRTVAEMAQTTWVIENAELEQQIQGGKELKDALAQLIPGLDVSSRSRTNYGMNVRGRPLVVLVDGVRLNSSRTDSRQLDSIDPFNIDRIEVISGATSLYGGGSTGGLINIVTKKGQPETIMEFEAGTKSGFSSSKDHDERIAGAVSGGNEHISGRLSVAYQKFGGWFDGNGDATLLDNTQTGLQYSDRLDIMGTGTLNIDESRQLQLITQYYKSQGDDDYGLNLGKGFSAIRGTSTPFVSNGLNSDRIPGTERHLISLQYSDSAFLGQELVGQVYYRDESLRFYPFPTVNANKQVTAFSSSQQDTDQYGMKLTLNSKPMDGWQITWGLDADHERFTSNQMFFDLAQASASGGLNNKKIYTTGRYPSYDITNLAAFLQSGYDINNLFTLNGGVRYQYTENKIDDFIGYAQQRQIAAGKATSADAIPGGSVDYDNFLFNAGLLMHITERQQAWLNFSQGVELPDPGKYYGRGIYGAAVNGHLPLTKSVNVSDSKLEGVKVDSYELGWRFTGNNLRTQIAAYYSISDKSVVANKDLTISVVDDKRRIYGVEGAVDYLIPDTDWSTGVNFNVLKTESKVNGTWQKYDVKTASPSKATAYIGWAPDPWSLRVQSTTSFDVSDAQGYKVDGYTTVDLLGSYQLPVGTLSFSIENLFDRDYTTVWGQRAPLYYSPGYGPASLYDYKGRGRTFGLNYSVLF.

The first 25 residues, 1-25, serve as a signal peptide directing secretion; the sequence is MMISKKYTLWALNPLLLTMMAPAVA. Positions 31–38 match the TonB box motif; the sequence is ETFVVSAN. In terms of domain architecture, TBDR plug spans 43–153; it reads TVAEMAQTTW…TGGLINIVTK (111 aa). The region spanning 158 to 733 is the TBDR beta-barrel domain; it reads ETIMEFEAGT…TFGLNYSVLF (576 aa). The short motif at 716–733 is the TonB C-terminal box element; that stretch reads YDYKGRGRTFGLNYSVLF.

The protein belongs to the TonB-dependent receptor family.

The protein resides in the cell outer membrane. Functionally, receptor for aerobactin. This is Ferric aerobactin receptor (iutA) from Klebsiella pneumoniae.